We begin with the raw amino-acid sequence, 403 residues long: Enoyl-[acyl-carrier-protein] reductase [NADH] (403 aa).

NAD(+) contacts are provided by residues 49–54, 75–76, 112–113, and 141–142; these read GASSGY, FE, DA, and LA. Position 227 (Tyr227) interacts with substrate. Tyr237 functions as the Proton donor in the catalytic mechanism. NAD(+) contacts are provided by residues Lys246 and 276–278; that span reads VVT.

The protein belongs to the TER reductase family. Monomer.

It carries out the reaction a 2,3-saturated acyl-[ACP] + NAD(+) = a (2E)-enoyl-[ACP] + NADH + H(+). The protein operates within lipid metabolism; fatty acid biosynthesis. In terms of biological role, involved in the final reduction of the elongation cycle of fatty acid synthesis (FAS II). Catalyzes the reduction of a carbon-carbon double bond in an enoyl moiety that is covalently linked to an acyl carrier protein (ACP). The sequence is that of Enoyl-[acyl-carrier-protein] reductase [NADH] from Pseudomonas putida (strain ATCC 47054 / DSM 6125 / CFBP 8728 / NCIMB 11950 / KT2440).